Here is a 105-residue protein sequence, read N- to C-terminus: MKNKEREIIKIILRAYDHHLIDQAAKKIIDIVTKTGAQIEGPIPLPTKKEVFTVLRSPFVNKDSREQFERRTHKRLIQIVNPNNKTIESLMHINLPSAIDILLKK.

This sequence belongs to the universal ribosomal protein uS10 family. Part of the 30S ribosomal subunit.

In terms of biological role, involved in the binding of tRNA to the ribosomes. The sequence is that of Small ribosomal subunit protein uS10 from Phytoplasma australiense.